The primary structure comprises 75 residues: Small ribosomal subunit protein bS18 (75 aa).

Belongs to the bacterial ribosomal protein bS18 family. In terms of assembly, part of the 30S ribosomal subunit. Forms a tight heterodimer with protein bS6.

Its function is as follows. Binds as a heterodimer with protein bS6 to the central domain of the 16S rRNA, where it helps stabilize the platform of the 30S subunit. The protein is Small ribosomal subunit protein bS18 of Desulforudis audaxviator (strain MP104C).